We begin with the raw amino-acid sequence, 430 residues long: Enolase (430 aa).

(2R)-2-phosphoglycerate is bound at residue Q167. Catalysis depends on E209, which acts as the Proton donor. The Mg(2+) site is built by D246, E287, and D314. (2R)-2-phosphoglycerate is bound by residues K339, R368, S369, and K390. The active-site Proton acceptor is the K339.

This sequence belongs to the enolase family. Mg(2+) serves as cofactor.

The protein localises to the cytoplasm. The protein resides in the secreted. It localises to the cell surface. It carries out the reaction (2R)-2-phosphoglycerate = phosphoenolpyruvate + H2O. It functions in the pathway carbohydrate degradation; glycolysis; pyruvate from D-glyceraldehyde 3-phosphate: step 4/5. Functionally, catalyzes the reversible conversion of 2-phosphoglycerate (2-PG) into phosphoenolpyruvate (PEP). It is essential for the degradation of carbohydrates via glycolysis. In Prochlorococcus marinus subsp. pastoris (strain CCMP1986 / NIES-2087 / MED4), this protein is Enolase.